A 197-amino-acid polypeptide reads, in one-letter code: 3-isopropylmalate dehydratase small subunit (197 aa).

This sequence belongs to the LeuD family. LeuD type 1 subfamily. In terms of assembly, heterodimer of LeuC and LeuD.

It catalyses the reaction (2R,3S)-3-isopropylmalate = (2S)-2-isopropylmalate. Its pathway is amino-acid biosynthesis; L-leucine biosynthesis; L-leucine from 3-methyl-2-oxobutanoate: step 2/4. Functionally, catalyzes the isomerization between 2-isopropylmalate and 3-isopropylmalate, via the formation of 2-isopropylmaleate. In Geobacillus sp. (strain WCH70), this protein is 3-isopropylmalate dehydratase small subunit.